Consider the following 257-residue polypeptide: 5'-nucleotidase SurE (257 aa).

Positions 8, 9, 40, and 95 each coordinate a divalent metal cation.

This sequence belongs to the SurE nucleotidase family. A divalent metal cation serves as cofactor.

Its subcellular location is the cytoplasm. The enzyme catalyses a ribonucleoside 5'-phosphate + H2O = a ribonucleoside + phosphate. Functionally, nucleotidase that shows phosphatase activity on nucleoside 5'-monophosphates. The sequence is that of 5'-nucleotidase SurE from Desulfovibrio desulfuricans (strain ATCC 27774 / DSM 6949 / MB).